Reading from the N-terminus, the 1040-residue chain is Multidrug resistance protein MdtB (1040 aa).

Transmembrane regions (helical) follow at residues 25 to 45 (LLMA…PVAA), 347 to 367 (LMLA…NIPA), 369 to 389 (IIPG…MVFL), 396 to 416 (LTLM…IVVI), 440 to 460 (IGFT…PLLF), 472 to 492 (FAVT…TLTP), 537 to 557 (WLTL…WIVI), 863 to 883 (LGST…VLGV), 888 to 908 (FIHP…ALLA), 910 to 930 (IIAG…LIGI), 968 to 988 (ILMT…STGV), and 998 to 1018 (IAMV…TPVI).

This sequence belongs to the resistance-nodulation-cell division (RND) (TC 2.A.6) family. MdtB subfamily. As to quaternary structure, part of a tripartite efflux system composed of MdtA, MdtB and MdtC. MdtB forms a heteromultimer with MdtC.

The protein resides in the cell inner membrane. The polypeptide is Multidrug resistance protein MdtB (Salmonella paratyphi A (strain ATCC 9150 / SARB42)).